Reading from the N-terminus, the 627-residue chain is Hemocyanin D chain (627 aa).

Residues H171, H175, H202, H322, H326, and H362 each coordinate Cu cation. N445 carries N-linked (GlcNAc...) asparagine glycosylation. Residues C531 and C579 are joined by a disulfide bond.

Belongs to the tyrosinase family. Hemocyanin subfamily. In terms of assembly, tarantula hemocyanin is a 24-chain polymer with seven different chains identified. As to expression, hemolymph.

The protein localises to the secreted. It localises to the extracellular space. Its function is as follows. Hemocyanins are copper-containing oxygen carriers occurring freely dissolved in the hemolymph of many mollusks and arthropods. The polypeptide is Hemocyanin D chain (HCD) (Aphonopelma sp. (American tarantula)).